Consider the following 162-residue polypeptide: 2-C-methyl-D-erythritol 2,4-cyclodiphosphate synthase (162 aa).

The a divalent metal cation site is built by aspartate 10 and histidine 12. Residues aspartate 10–histidine 12 and histidine 36–serine 37 contribute to the 4-CDP-2-C-methyl-D-erythritol 2-phosphate site. An a divalent metal cation-binding site is contributed by histidine 44. 4-CDP-2-C-methyl-D-erythritol 2-phosphate is bound by residues aspartate 58 to glycine 60, phenylalanine 63 to aspartate 67, alanine 102 to alanine 108, threonine 134 to glutamate 137, phenylalanine 141, and arginine 144.

The protein belongs to the IspF family. Homotrimer. The cofactor is a divalent metal cation.

The enzyme catalyses 4-CDP-2-C-methyl-D-erythritol 2-phosphate = 2-C-methyl-D-erythritol 2,4-cyclic diphosphate + CMP. The protein operates within isoprenoid biosynthesis; isopentenyl diphosphate biosynthesis via DXP pathway; isopentenyl diphosphate from 1-deoxy-D-xylulose 5-phosphate: step 4/6. Involved in the biosynthesis of isopentenyl diphosphate (IPP) and dimethylallyl diphosphate (DMAPP), two major building blocks of isoprenoid compounds. Catalyzes the conversion of 4-diphosphocytidyl-2-C-methyl-D-erythritol 2-phosphate (CDP-ME2P) to 2-C-methyl-D-erythritol 2,4-cyclodiphosphate (ME-CPP) with a corresponding release of cytidine 5-monophosphate (CMP). The sequence is that of 2-C-methyl-D-erythritol 2,4-cyclodiphosphate synthase from Chromohalobacter salexigens (strain ATCC BAA-138 / DSM 3043 / CIP 106854 / NCIMB 13768 / 1H11).